A 327-amino-acid chain; its full sequence is tRNA dimethylallyltransferase (327 aa).

Residue 14 to 21 (GPTASGKT) coordinates ATP. 16–21 (TASGKT) contacts substrate. Interaction with substrate tRNA stretches follow at residues 39-42 (DSAL) and 163-167 (QRIQR).

Belongs to the IPP transferase family. Monomer. The cofactor is Mg(2+).

The catalysed reaction is adenosine(37) in tRNA + dimethylallyl diphosphate = N(6)-dimethylallyladenosine(37) in tRNA + diphosphate. Its function is as follows. Catalyzes the transfer of a dimethylallyl group onto the adenine at position 37 in tRNAs that read codons beginning with uridine, leading to the formation of N6-(dimethylallyl)adenosine (i(6)A). The chain is tRNA dimethylallyltransferase from Xanthomonas euvesicatoria pv. vesicatoria (strain 85-10) (Xanthomonas campestris pv. vesicatoria).